Here is a 356-residue protein sequence, read N- to C-terminus: UDP-N-acetylglucosamine--N-acetylmuramyl-(pentapeptide) pyrophosphoryl-undecaprenol N-acetylglucosamine transferase (356 aa).

3 residues coordinate UDP-N-acetyl-alpha-D-glucosamine: arginine 166, serine 196, and glutamine 290.

It belongs to the glycosyltransferase 28 family. MurG subfamily.

It is found in the cell membrane. It carries out the reaction Mur2Ac(oyl-L-Ala-gamma-D-Glu-L-Lys-D-Ala-D-Ala)-di-trans,octa-cis-undecaprenyl diphosphate + UDP-N-acetyl-alpha-D-glucosamine = beta-D-GlcNAc-(1-&gt;4)-Mur2Ac(oyl-L-Ala-gamma-D-Glu-L-Lys-D-Ala-D-Ala)-di-trans,octa-cis-undecaprenyl diphosphate + UDP + H(+). It participates in cell wall biogenesis; peptidoglycan biosynthesis. Its function is as follows. Cell wall formation. Catalyzes the transfer of a GlcNAc subunit on undecaprenyl-pyrophosphoryl-MurNAc-pentapeptide (lipid intermediate I) to form undecaprenyl-pyrophosphoryl-MurNAc-(pentapeptide)GlcNAc (lipid intermediate II). The protein is UDP-N-acetylglucosamine--N-acetylmuramyl-(pentapeptide) pyrophosphoryl-undecaprenol N-acetylglucosamine transferase of Staphylococcus aureus (strain USA300).